The chain runs to 350 residues: Nicotinate-nucleotide--dimethylbenzimidazole phosphoribosyltransferase (350 aa).

Catalysis depends on glutamate 316, which acts as the Proton acceptor.

This sequence belongs to the CobT family.

The enzyme catalyses 5,6-dimethylbenzimidazole + nicotinate beta-D-ribonucleotide = alpha-ribazole 5'-phosphate + nicotinate + H(+). Its pathway is nucleoside biosynthesis; alpha-ribazole biosynthesis; alpha-ribazole from 5,6-dimethylbenzimidazole: step 1/2. Its function is as follows. Catalyzes the synthesis of alpha-ribazole-5'-phosphate from nicotinate mononucleotide (NAMN) and 5,6-dimethylbenzimidazole (DMB). This chain is Nicotinate-nucleotide--dimethylbenzimidazole phosphoribosyltransferase, found in Bradyrhizobium diazoefficiens (strain JCM 10833 / BCRC 13528 / IAM 13628 / NBRC 14792 / USDA 110).